A 505-amino-acid polypeptide reads, in one-letter code: Buccalin (505 aa).

An N-terminal signal peptide occupies residues 1 to 25; it reads MAHHRGHRHILLYVSLALSLGLALA. A propeptide spanning residues 26-62 is cleaved from the precursor; the sequence is EDATDPSDDTGSFDDVEAVSEEADLDPYSMSQELNKR. Valine amide is present on valine 74. Leucine amide occurs at positions 88 and 102. Position 106 is a pyrrolidone carboxylic acid (glutamine 106). Position 116 is an isoleucine amide (isoleucine 116). Leucine amide is present on residues leucine 129, leucine 143, leucine 157, leucine 171, leucine 185, leucine 199, leucine 213, leucine 227, leucine 241, leucine 254, leucine 267, leucine 281, leucine 294, leucine 307, leucine 321, and leucine 335. Glutamate 349 is modified (glutamic acid 1-amide). Leucine 363, leucine 377, leucine 391, leucine 405, leucine 419, and leucine 433 each carry leucine amide. Isoleucine amide is present on residues isoleucine 447 and isoleucine 461. A Pyrrolidone carboxylic acid modification is found at glutamine 465. Residues 472-505 are disordered; that stretch reads SGRLGKRSSSEQEEEDVRQVEKRSTTEEQSSKSL. Leucine 475 carries the post-translational modification Leucine amide. Positions 488 to 505 are enriched in basic and acidic residues; sequence VRQVEKRSTTEEQSSKSL. The propeptide occupies 495 to 505; the sequence is STTEEQSSKSL.

As to expression, cholinergic motor neuron B15 innervating buccal muscles in Aplysia.

It localises to the secreted. In terms of biological role, modulatory neuropeptide, acting presynaptically on nerve terminals to inhibit acetylcholine release. The protein is Buccalin of Aplysia californica (California sea hare).